Consider the following 85-residue polypeptide: Large ribosomal subunit protein bL27 (85 aa).

Residues 1-21 (MAHKKGLGSTKNGRDSQAKRL) form a disordered region.

The protein belongs to the bacterial ribosomal protein bL27 family.

This Thermus thermophilus (strain ATCC BAA-163 / DSM 7039 / HB27) protein is Large ribosomal subunit protein bL27.